The following is an 82-amino-acid chain: Small ribosomal subunit protein bS16 (82 aa).

Belongs to the bacterial ribosomal protein bS16 family.

The polypeptide is Small ribosomal subunit protein bS16 (Pectobacterium carotovorum subsp. carotovorum (strain PC1)).